Consider the following 63-residue polypeptide: Large ribosomal subunit protein uL29 (63 aa).

Belongs to the universal ribosomal protein uL29 family.

The polypeptide is Large ribosomal subunit protein uL29 (Pectobacterium carotovorum subsp. carotovorum (strain PC1)).